Reading from the N-terminus, the 211-residue chain is Probable nicotinate-nucleotide adenylyltransferase (211 aa).

Belongs to the NadD family.

The catalysed reaction is nicotinate beta-D-ribonucleotide + ATP + H(+) = deamido-NAD(+) + diphosphate. The protein operates within cofactor biosynthesis; NAD(+) biosynthesis; deamido-NAD(+) from nicotinate D-ribonucleotide: step 1/1. Its function is as follows. Catalyzes the reversible adenylation of nicotinate mononucleotide (NaMN) to nicotinic acid adenine dinucleotide (NaAD). The sequence is that of Probable nicotinate-nucleotide adenylyltransferase from Wigglesworthia glossinidia brevipalpis.